The sequence spans 179 residues: uncharacterized protein (179 aa).

A compositionally biased stretch (basic and acidic residues) spans 1–15; that stretch reads MQRQTGHMEDKKRTG. Residues 1 to 32 are disordered; the sequence is MQRQTGHMEDKKRTGLESQGTENAFSDGRDGK.

This is an uncharacterized protein from Gallus gallus (Chicken).